A 70-amino-acid chain; its full sequence is DNA-directed RNA polymerase subunit omega (70 aa).

This sequence belongs to the RNA polymerase subunit omega family. The RNAP catalytic core consists of 2 alpha, 1 beta, 1 beta' and 1 omega subunit. When a sigma factor is associated with the core the holoenzyme is formed, which can initiate transcription.

The catalysed reaction is RNA(n) + a ribonucleoside 5'-triphosphate = RNA(n+1) + diphosphate. In terms of biological role, promotes RNA polymerase assembly. Latches the N- and C-terminal regions of the beta' subunit thereby facilitating its interaction with the beta and alpha subunits. The polypeptide is DNA-directed RNA polymerase subunit omega (Thermoanaerobacter pseudethanolicus (strain ATCC 33223 / 39E) (Clostridium thermohydrosulfuricum)).